A 547-amino-acid chain; its full sequence is MTITVEPSVTTGPIAGSAKAYREIEAPGSGATLQVPFRRVHLSTGDHFDLYDTSGPYTDTDTVIDLTAGLPHRPGVVRDRGTQLQRARAGEITAEMAFIAAREDMSAELVRDEVARGRAVIPANHHHPESEPMIIGKAFAVKVNANIGNSAVTSSIAEEVDKMVWATRWGADTIMDLSTGKNIHETREWILRNSPVPVGTVPIYQALEKVKGDPTELTWEIYRDTVIEQCEQGVDYMTVHAGVLLRYVPLTAKRVTGIVSRGGSIMAAWCLAHHRESFLYTNFEELCDIFARYDVTFSLGDGLRPGSIADANDAAQFAELRTLGELTKIAKAHGAQVMIEGPGHIPMHKIVENVRLEEELCEEAPFYTLGPLATDIAPAYDHITSAIGAAIIAQAGTAMLCYVTPKEHLGLPDRKDVKDGVIAYKIAAHAADLAKGHPRAQERDDALSTARFEFRWNDQFALSLDPDTAREFHDETLPAEPAKTAHFCSMCGPKFCSMRITQDVREYAAEHGLETEADIEAVLAAGMAEKSREFAEHGNRVYLPITQ.

Substrate-binding positions include asparagine 146, methionine 175, tyrosine 204, histidine 240, 260–262 (SRG), 301–304 (DGLR), and glutamate 340. Histidine 344 is a Zn(2+) binding site. Tyrosine 367 provides a ligand contact to substrate. Position 408 (histidine 408) interacts with Zn(2+). 3 residues coordinate [4Fe-4S] cluster: cysteine 488, cysteine 491, and cysteine 496.

Belongs to the ThiC family. [4Fe-4S] cluster serves as cofactor.

It carries out the reaction 5-amino-1-(5-phospho-beta-D-ribosyl)imidazole + S-adenosyl-L-methionine = 4-amino-2-methyl-5-(phosphooxymethyl)pyrimidine + CO + 5'-deoxyadenosine + formate + L-methionine + 3 H(+). It participates in cofactor biosynthesis; thiamine diphosphate biosynthesis. Catalyzes the synthesis of the hydroxymethylpyrimidine phosphate (HMP-P) moiety of thiamine from aminoimidazole ribotide (AIR) in a radical S-adenosyl-L-methionine (SAM)-dependent reaction. The sequence is that of Phosphomethylpyrimidine synthase from Mycobacterium bovis (strain ATCC BAA-935 / AF2122/97).